A 70-amino-acid chain; its full sequence is Small, acid-soluble spore protein 1 (70 aa).

It belongs to the alpha/beta-type SASP family.

Its function is as follows. SASP are bound to spore DNA. They are double-stranded DNA-binding proteins that cause DNA to change to an a-like conformation. They protect the DNA backbone from chemical and enzymatic cleavage and are thus involved in dormant spore's high resistance to UV light. The protein is Small, acid-soluble spore protein 1 (sasP-1) of Geobacillus stearothermophilus (Bacillus stearothermophilus).